A 339-amino-acid chain; its full sequence is Adenosine deaminase (339 aa).

Positions 15 and 17 each coordinate Zn(2+). Substrate is bound by residues His-17, Asp-19, and Gly-172. His-199 lines the Zn(2+) pocket. Glu-202 serves as the catalytic Proton donor. Position 279 (Asp-279) interacts with Zn(2+).

It belongs to the metallo-dependent hydrolases superfamily. Adenosine and AMP deaminases family. Adenosine deaminase subfamily. Zn(2+) is required as a cofactor.

It catalyses the reaction adenosine + H2O + H(+) = inosine + NH4(+). It carries out the reaction 2'-deoxyadenosine + H2O + H(+) = 2'-deoxyinosine + NH4(+). Its function is as follows. Catalyzes the hydrolytic deamination of adenosine and 2-deoxyadenosine. The sequence is that of Adenosine deaminase from Lacticaseibacillus paracasei (strain ATCC 334 / BCRC 17002 / CCUG 31169 / CIP 107868 / KCTC 3260 / NRRL B-441) (Lactobacillus paracasei).